We begin with the raw amino-acid sequence, 221 residues long: Aspartic protease inhibitor 1 (221 aa).

The first 23 residues, 1–23, serve as a signal peptide directing secretion; sequence MMKCLFFLCLCLFPILVFSSTFT. The propeptide occupies 24–32; it reads SQNPINLPS. The Vacuolar targeting signal signature appears at 26–31; that stretch reads NPINLP. An N-linked (GlcNAc...) asparagine glycan is attached at asparagine 51. 2 disulfide bridges follow: cysteine 80–cysteine 125 and cysteine 174–cysteine 186.

This sequence belongs to the protease inhibitor I3 (leguminous Kunitz-type inhibitor) family. Tubers, young leaves and flower bud. Not detected in root, stem or mature leaves.

It is found in the vacuole. Its function is as follows. Inhibitor of cathepsin D (aspartic protease). May also inhibit trypsin and chymotrypsin (serine proteases). Protects the plant by inhibiting proteases of invading organisms. In Solanum tuberosum (Potato), this protein is Aspartic protease inhibitor 1.